The chain runs to 744 residues: Prestin (744 aa).

The Cytoplasmic segment spans residues M1–K75. Residues F76–A105 traverse the membrane as a helical segment. Residues A106–P108 are Extracellular-facing. The chain crosses the membrane as a helical span at residues P109 to F126. Topologically, residues G127–F137 are cytoplasmic. Residues A138–L151 form a helical membrane-spanning segment. The Extracellular segment spans residues V152–T168. The Involved in motor function signature appears at I158 to T168. Residues N163 and N166 are each glycosylated (N-linked (GlcNAc...) asparagine). A helical membrane pass occupies residues E169 to C196. Topologically, residues R197–T206 are cytoplasmic. The helical transmembrane segment at E207 to F230 threads the bilayer. The Extracellular segment spans residues G231 to F241. An intramembrane region (helical) is located at residues S242–N253. The Extracellular portion of the chain corresponds to V254–N258. The helical transmembrane segment at V259–F282 threads the bilayer. The Cytoplasmic segment spans residues K283 to P291. The helical transmembrane segment at L292–F307 threads the bilayer. The Extracellular portion of the chain corresponds to N308–D332. The helical transmembrane segment at T333–Y367 threads the bilayer. Over Q368–D370 the chain is Cytoplasmic. Residues G371–F388 traverse the membrane as a helical segment. Residues Q389 to S396 are Extracellular-facing. The chain crosses the membrane as a helical span at residues L397–T406. S398 contributes to the salicylate binding site. Topologically, residues G407–T410 are cytoplasmic. The helical transmembrane segment at Q411 to F432 threads the bilayer. Residues E433–P436 lie on the Extracellular side of the membrane. Residues Q437–T464 form a helical membrane-spanning segment. S465 is a topological domain (cytoplasmic). The helical transmembrane segment at K466–F481 threads the bilayer. At L482–G483 the chain is on the extracellular side. Residues L484–Q504 traverse the membrane as a helical segment. The tract at residues S505–A718 is extended region for STAS domain. The Cytoplasmic segment spans residues S505–A744. The STAS domain occupies A525–S713. Residues A720–A744 form a disordered region.

The protein belongs to the SLC26A/SulP transporter (TC 2.A.53) family. In terms of assembly, homodimer. Interacts (via STAS domain) with CALM; this interaction is calcium-dependent and the STAS domain interacts with only one lobe of CALM which is an elongated conformation. Interacts with MYH1. In terms of tissue distribution, expressed in the outer hair cells (OHC) of the organ of Corti of the inner ear. Also weak expression in brain and testis. Very weakly expressed in heart, spleen, muscle and lactating mammary glands. Expressed in cardiac myocytes (at protein level), both in the surface sarcolemma and along the t-tubule. Weakly expressed in skeletal muscle cells (at protein level).

It is found in the lateral cell membrane. The enzyme catalyses 2 hydrogencarbonate(in) + chloride(out) = 2 hydrogencarbonate(out) + chloride(in). Voltage-sensitive motor protein that drives outer hair cell (OHC) electromotility (eM) and participates in sound amplification in the hearing organ. Converts changes in the transmembrane electric potential into mechanical displacements resulting in the coupling of its expansion to movement of a charged voltage sensor across the lipid membrane. The nature of the voltage sensor is not completely clear, and two models compete. In the first model, acts as an incomplete transporter where intracellular chloride anion acts as extrinsic voltage sensor that drives conformational change in the protein which is sufficient to produce a length change in the plane of the membrane and hence in the length of the OHC. The second model in which multiple charged amino acid residues are distributed at the intracellular and extracellular membrane interfaces that form an intrinsic voltage sensor, whose movement produces the non-linear capacitance (NLC). However, the effective voltage sensor may be the result of a hybrid voltage sensor, assembled from intrinsic charge (charged residues) and extrinsic charge (bound anion). Notably, binding of anions to the anion-binding pocket partially neutralizes the intrinsic positive charge rather than to form an electrically negative sensor, therefore remaining charge may serve as voltage sensor that, after depolarization, moves from down (expanded state) to up (contracted) conformation, which is accompanied by an eccentric contraction of the intermembrane cross-sectional area of the protein as well as a major increase in the hydrophobic thickness of the protein having as consequences the plasma membrane thickening and the cell contraction after membrane depolarization. The anion-binding pocket transits from the inward-open (Down) state, where it is exposed toward the intracellular solvent in the absence of anion, to the occluded (Up) state upon anion binding. Salicylate competes for the anion-binding site and inhibits the voltage-sensor movement, and therefore inhibits the charge transfer and electromotility by displacing Cl(-) from the anion-binding site and by preventing the structural transitions to the contracted state. In addition, can act as a weak Cl(-)/HCO3(-) antiporter across the cell membrane and so regulate the intracellular pH of the outer hair cells (OHCs), while firstly found as being unable to mediate electrogenic anion transport. Moreover, supports a role in cardiac mechanical amplification serving as an elastic element to enhance the actomyosin- based sarcomere contraction system. This Mus musculus (Mouse) protein is Prestin.